Reading from the N-terminus, the 65-residue chain is Large ribosomal subunit protein bL35 (65 aa).

Belongs to the bacterial ribosomal protein bL35 family.

The polypeptide is Large ribosomal subunit protein bL35 (Porphyromonas gingivalis (strain ATCC 33277 / DSM 20709 / CIP 103683 / JCM 12257 / NCTC 11834 / 2561)).